Consider the following 460-residue polypeptide: Adenylosuccinate lyase (460 aa).

N(6)-(1,2-dicarboxyethyl)-AMP-binding positions include 15-16, 88-90, and 120-121; these read RY, NHD, and TS. Residue H169 is the Proton donor/acceptor of the active site. Q245 is a binding site for N(6)-(1,2-dicarboxyethyl)-AMP. S293 serves as the catalytic Proton donor/acceptor. Residues S294, 299 to 301, N307, R333, and 338 to 342 each bind N(6)-(1,2-dicarboxyethyl)-AMP; these read KIN and STVLR.

It belongs to the lyase 1 family. Adenylosuccinate lyase subfamily. In terms of assembly, homotetramer. Residues from neighboring subunits contribute catalytic and substrate-binding residues to each active site.

The enzyme catalyses N(6)-(1,2-dicarboxyethyl)-AMP = fumarate + AMP. The catalysed reaction is (2S)-2-[5-amino-1-(5-phospho-beta-D-ribosyl)imidazole-4-carboxamido]succinate = 5-amino-1-(5-phospho-beta-D-ribosyl)imidazole-4-carboxamide + fumarate. It participates in purine metabolism; AMP biosynthesis via de novo pathway; AMP from IMP: step 2/2. Its pathway is purine metabolism; IMP biosynthesis via de novo pathway; 5-amino-1-(5-phospho-D-ribosyl)imidazole-4-carboxamide from 5-amino-1-(5-phospho-D-ribosyl)imidazole-4-carboxylate: step 2/2. In terms of biological role, catalyzes two reactions in de novo purine nucleotide biosynthesis. Catalyzes the breakdown of 5-aminoimidazole- (N-succinylocarboxamide) ribotide (SAICAR or 2-[5-amino-1-(5-phospho-beta-D-ribosyl)imidazole-4-carboxamido]succinate) to 5-aminoimidazole-4-carboxamide ribotide (AICAR or 5-amino-1-(5-phospho-beta-D-ribosyl)imidazole-4-carboxamide) and fumarate, and of adenylosuccinate (ADS or N(6)-(1,2-dicarboxyethyl)-AMP) to adenosine monophosphate (AMP) and fumarate. The chain is Adenylosuccinate lyase (purB) from Buchnera aphidicola subsp. Baizongia pistaciae (strain Bp).